The primary structure comprises 356 residues: GTPase Obg (356 aa).

Residues 1 to 159 (MKFLDEAKVY…RWIWLRMKLI (159 aa)) enclose the Obg domain. The region spanning 160-327 (ADAGLVGLPN…ALRKLADVVG (168 aa)) is the OBG-type G domain. GTP is bound by residues 166–173 (GLPNAGKS), 191–195 (FTTLH), 212–215 (DIPG), 279–282 (NKID), and 308–310 (SGA). Positions 173 and 193 each coordinate Mg(2+). Residues 327–356 (GEQPVSSKAKNAVESAATEEPWAAPVPPQG) are disordered.

Belongs to the TRAFAC class OBG-HflX-like GTPase superfamily. OBG GTPase family. In terms of assembly, monomer. Mg(2+) serves as cofactor.

The protein localises to the cytoplasm. Its function is as follows. An essential GTPase which binds GTP, GDP and possibly (p)ppGpp with moderate affinity, with high nucleotide exchange rates and a fairly low GTP hydrolysis rate. Plays a role in control of the cell cycle, stress response, ribosome biogenesis and in those bacteria that undergo differentiation, in morphogenesis control. The protein is GTPase Obg of Bradyrhizobium sp. (strain ORS 278).